Reading from the N-terminus, the 166-residue chain is NAD(P)H-quinone oxidoreductase subunit I, chloroplastic (166 aa).

2 consecutive 4Fe-4S ferredoxin-type domains span residues G55 to K84 and L95 to E124. Positions 64, 67, 70, 74, 104, 107, 110, and 114 each coordinate [4Fe-4S] cluster.

Belongs to the complex I 23 kDa subunit family. NDH is composed of at least 16 different subunits, 5 of which are encoded in the nucleus. [4Fe-4S] cluster serves as cofactor.

It is found in the plastid. It localises to the chloroplast thylakoid membrane. It carries out the reaction a plastoquinone + NADH + (n+1) H(+)(in) = a plastoquinol + NAD(+) + n H(+)(out). The enzyme catalyses a plastoquinone + NADPH + (n+1) H(+)(in) = a plastoquinol + NADP(+) + n H(+)(out). Functionally, NDH shuttles electrons from NAD(P)H:plastoquinone, via FMN and iron-sulfur (Fe-S) centers, to quinones in the photosynthetic chain and possibly in a chloroplast respiratory chain. The immediate electron acceptor for the enzyme in this species is believed to be plastoquinone. Couples the redox reaction to proton translocation, and thus conserves the redox energy in a proton gradient. The protein is NAD(P)H-quinone oxidoreductase subunit I, chloroplastic of Picradeniopsis absinthifolia (Hairyseed bahia).